Consider the following 554-residue polypeptide: Phosphomethylpyrimidine synthase (554 aa).

Substrate-binding positions include Asn188, Met217, Tyr246, His282, 302–304 (SRG), 343–346 (DGLR), and Glu382. Position 386 (His386) interacts with Zn(2+). Residue Tyr409 coordinates substrate. His450 contributes to the Zn(2+) binding site. [4Fe-4S] cluster is bound by residues Cys530, Cys533, and Cys538.

It belongs to the ThiC family. Homodimer. It depends on [4Fe-4S] cluster as a cofactor.

It carries out the reaction 5-amino-1-(5-phospho-beta-D-ribosyl)imidazole + S-adenosyl-L-methionine = 4-amino-2-methyl-5-(phosphooxymethyl)pyrimidine + CO + 5'-deoxyadenosine + formate + L-methionine + 3 H(+). It participates in cofactor biosynthesis; thiamine diphosphate biosynthesis. Functionally, catalyzes the synthesis of the hydroxymethylpyrimidine phosphate (HMP-P) moiety of thiamine from aminoimidazole ribotide (AIR) in a radical S-adenosyl-L-methionine (SAM)-dependent reaction. The protein is Phosphomethylpyrimidine synthase of Coxiella burnetii (strain CbuK_Q154) (Coxiella burnetii (strain Q154)).